The sequence spans 575 residues: Sorting nexin-41 (575 aa).

The disordered stretch occupies residues 30 to 66 (TDGPDDYDFTEPSINGSSDENAQSNAVAEPIEETDEP). A compositionally biased stretch (polar residues) spans 41-55 (PSINGSSDENAQSNA). The 121-residue stretch at 101–221 (QGKNPEVIRI…QKFLNPEYFW (121 aa)) folds into the PX domain. Arginine 139, serine 141, lysine 165, and arginine 188 together coordinate a 1,2-diacyl-sn-glycero-3-phospho-(1D-myo-inositol-3-phosphate). The tract at residues 467–486 (FRSSASPNNKSGSDSISSEV) is disordered. Polar residues predominate over residues 469–484 (SSASPNNKSGSDSISS).

This sequence belongs to the sorting nexin family.

It localises to the endosome membrane. The protein resides in the endomembrane system. May be required for cytoplasm to vacuole transport (Cvt) and pexophagy. The protein is Sorting nexin-41 (SNX41) of Kluyveromyces lactis (strain ATCC 8585 / CBS 2359 / DSM 70799 / NBRC 1267 / NRRL Y-1140 / WM37) (Yeast).